Here is a 299-residue protein sequence, read N- to C-terminus: ATP phosphoribosyltransferase (299 aa).

It belongs to the ATP phosphoribosyltransferase family. Long subfamily. Equilibrium between an active dimeric form, an inactive hexameric form and higher aggregates. Interconversion between the various forms is largely reversible and is influenced by the natural substrates and inhibitors of the enzyme. Mg(2+) is required as a cofactor.

The protein resides in the cytoplasm. It carries out the reaction 1-(5-phospho-beta-D-ribosyl)-ATP + diphosphate = 5-phospho-alpha-D-ribose 1-diphosphate + ATP. It participates in amino-acid biosynthesis; L-histidine biosynthesis; L-histidine from 5-phospho-alpha-D-ribose 1-diphosphate: step 1/9. Its activity is regulated as follows. Feedback inhibited by histidine. Catalyzes the condensation of ATP and 5-phosphoribose 1-diphosphate to form N'-(5'-phosphoribosyl)-ATP (PR-ATP). Has a crucial role in the pathway because the rate of histidine biosynthesis seems to be controlled primarily by regulation of HisG enzymatic activity. This chain is ATP phosphoribosyltransferase, found in Klebsiella pneumoniae (strain 342).